Reading from the N-terminus, the 291-residue chain is Acetyl-coenzyme A carboxylase carboxyl transferase subunit beta (291 aa).

One can recognise a CoA carboxyltransferase N-terminal domain in the interval 23-291 (VWHKCPSCTA…PPDLPVEESV (269 aa)). Positions 27, 30, 46, and 49 each coordinate Zn(2+). The C4-type zinc finger occupies 27–49 (CPSCTAVLYRVELERNLEVCPKC).

It belongs to the AccD/PCCB family. Acetyl-CoA carboxylase is a heterohexamer composed of biotin carboxyl carrier protein (AccB), biotin carboxylase (AccC) and two subunits each of ACCase subunit alpha (AccA) and ACCase subunit beta (AccD). The cofactor is Zn(2+).

Its subcellular location is the cytoplasm. The enzyme catalyses N(6)-carboxybiotinyl-L-lysyl-[protein] + acetyl-CoA = N(6)-biotinyl-L-lysyl-[protein] + malonyl-CoA. It participates in lipid metabolism; malonyl-CoA biosynthesis; malonyl-CoA from acetyl-CoA: step 1/1. In terms of biological role, component of the acetyl coenzyme A carboxylase (ACC) complex. Biotin carboxylase (BC) catalyzes the carboxylation of biotin on its carrier protein (BCCP) and then the CO(2) group is transferred by the transcarboxylase to acetyl-CoA to form malonyl-CoA. The sequence is that of Acetyl-coenzyme A carboxylase carboxyl transferase subunit beta from Coxiella burnetii (strain Dugway 5J108-111).